The sequence spans 199 residues: Probable NADH dehydrogenase [ubiquinone] iron-sulfur protein 7, mitochondrial (199 aa).

The N-terminal 16 residues, 1-16 (MLSALRTAGALSTRRL), are a transit peptide targeting the mitochondrion. The [4Fe-4S] cluster site is built by Cys74, Cys75, Cys139, and Cys169.

The protein belongs to the complex I 20 kDa subunit family. In terms of assembly, complex I is composed of 45 different subunits This is a component of the iron-sulfur (IP) fragment of the enzyme. [4Fe-4S] cluster serves as cofactor.

It is found in the mitochondrion. It carries out the reaction a ubiquinone + NADH + 5 H(+)(in) = a ubiquinol + NAD(+) + 4 H(+)(out). Its function is as follows. Core subunit of the mitochondrial membrane respiratory chain NADH dehydrogenase (Complex I) that is believed to belong to the minimal assembly required for catalysis. Complex I functions in the transfer of electrons from NADH to the respiratory chain. The immediate electron acceptor for the enzyme is believed to be ubiquinone. In Caenorhabditis briggsae, this protein is Probable NADH dehydrogenase [ubiquinone] iron-sulfur protein 7, mitochondrial.